The chain runs to 58 residues: Keratin-associated protein 19-9b (58 aa).

A 12 X 2 AA repeats of G-[YCGS] region spans residues 6–52; the sequence is GNYYGGLGYGLGGFGGFGGLGYGYGSSYGLGGYGGYGYFSPSFYGGY.

It belongs to the KRTAP type 19 family. Interacts with hair keratins.

Functionally, in the hair cortex, hair keratin intermediate filaments are embedded in an interfilamentous matrix, consisting of hair keratin-associated proteins (KRTAP), which are essential for the formation of a rigid and resistant hair shaft through their extensive disulfide bond cross-linking with abundant cysteine residues of hair keratins. The matrix proteins include the high-sulfur and high-glycine-tyrosine keratins. The chain is Keratin-associated protein 19-9b (Krtap19-9b) from Mus musculus (Mouse).